Consider the following 357-residue polypeptide: tRNA/tmRNA (uracil-C(5))-methyltransferase (357 aa).

Positions 180, 209, 214, 230, and 290 each coordinate S-adenosyl-L-methionine. Cysteine 315 functions as the Nucleophile in the catalytic mechanism. Residue glutamate 349 is the Proton acceptor of the active site.

This sequence belongs to the class I-like SAM-binding methyltransferase superfamily. RNA M5U methyltransferase family. TrmA subfamily.

It carries out the reaction uridine(54) in tRNA + S-adenosyl-L-methionine = 5-methyluridine(54) in tRNA + S-adenosyl-L-homocysteine + H(+). The enzyme catalyses uridine(341) in tmRNA + S-adenosyl-L-methionine = 5-methyluridine(341) in tmRNA + S-adenosyl-L-homocysteine + H(+). In terms of biological role, dual-specificity methyltransferase that catalyzes the formation of 5-methyluridine at position 54 (m5U54) in all tRNAs, and that of position 341 (m5U341) in tmRNA (transfer-mRNA). The chain is tRNA/tmRNA (uracil-C(5))-methyltransferase from Campylobacter jejuni (strain RM1221).